A 611-amino-acid chain; its full sequence is Adenosylhomocysteinase 3 (611 aa).

3 stretches are compositionally biased toward low complexity: residues 1–14 (MSVQ…AAKV), 36–57 (AAVG…APAA), and 68–81 (GPAA…GKVP). Positions 1-184 (MSVQVVSAAA…KQQKNSKGSS (184 aa)) are disordered. The residue at position 2 (serine 2) is an N-acetylserine. The segment at 2 to 109 (SVQVVSAAAA…DGGEALVSPD (108 aa)) is LISN domain, inhibits interaction with ITPR1. Residue serine 107 is modified to Phosphoserine. A compositionally biased stretch (basic residues) spans 135–144 (RPTKIGRRSL). Positions 145–164 (SRSISQSSTDSYSSAASYTD) are enriched in low complexity. 4 positions are modified to phosphoserine: serine 149, serine 152, serine 155, and serine 158. Threonine 236, aspartate 310, and glutamate 335 together coordinate substrate. 336-338 (SVT) contributes to the NAD(+) binding site. Residues lysine 365 and aspartate 369 each contribute to the substrate site. Residues asparagine 370, 401-406 (GEVGKG), glutamate 422, asparagine 457, 478-479 (MG), and asparagine 525 contribute to the NAD(+) site.

Belongs to the adenosylhomocysteinase family. Homotetramer. Forms heteromultimers with AHCYL1 (via the C-terminal region). Interacts with ITPR1; with lower affinity than AHCYL1 and maybe via ITPR1. Interacts with SLC4A4. Interacts with ZCCHC4. Requires NAD(+) as cofactor. Post-translationally, phosphorylated during neuronal differentiation at the LISN domain.

It is found in the cytoplasm. The protein localises to the microsome. It catalyses the reaction S-adenosyl-L-homocysteine + H2O = L-homocysteine + adenosine. Its pathway is amino-acid biosynthesis; L-homocysteine biosynthesis; L-homocysteine from S-adenosyl-L-homocysteine: step 1/1. Functionally, may regulate the electrogenic sodium/bicarbonate cotransporter SLC4A4 activity and Mg(2+)-sensitivity. On the contrary of its homolog AHCYL1, does not regulate ITPR1 sensitivity to inositol 1,4,5-trisphosphate. The polypeptide is Adenosylhomocysteinase 3 (AHCYL2) (Homo sapiens (Human)).